The following is a 530-amino-acid chain: Phosphoenolpyruvate carboxykinase (ATP) (530 aa).

Substrate is bound by residues arginine 59, tyrosine 198, and lysine 204. ATP-binding positions include lysine 204, histidine 223, and 239-247 (GLSGTGKTT). Mn(2+)-binding residues include lysine 204 and histidine 223. Aspartate 260 provides a ligand contact to Mn(2+). Residues glutamate 288, arginine 325, 440-441 (RI), and threonine 446 contribute to the ATP site. Arginine 325 is a binding site for substrate.

It belongs to the phosphoenolpyruvate carboxykinase (ATP) family. The cofactor is Mn(2+).

The protein localises to the cytoplasm. The catalysed reaction is oxaloacetate + ATP = phosphoenolpyruvate + ADP + CO2. It functions in the pathway carbohydrate biosynthesis; gluconeogenesis. Its function is as follows. Involved in the gluconeogenesis. Catalyzes the conversion of oxaloacetate (OAA) to phosphoenolpyruvate (PEP) through direct phosphoryl transfer between the nucleoside triphosphate and OAA. This is Phosphoenolpyruvate carboxykinase (ATP) from Azobacteroides pseudotrichonymphae genomovar. CFP2.